The chain runs to 176 residues: NAD(P)H-quinone oxidoreductase subunit 6, chloroplastic (176 aa).

A run of 5 helical transmembrane segments spans residues 10–30, 32–52, 61–81, 92–112, and 152–172; these read FLLV…VLLP, PIFS…LYIL, AQLL…VMFM, LWTV…FSLM, and FFLP…GAIS.

It belongs to the complex I subunit 6 family. In terms of assembly, NDH is composed of at least 16 different subunits, 5 of which are encoded in the nucleus.

Its subcellular location is the plastid. It localises to the chloroplast thylakoid membrane. The catalysed reaction is a plastoquinone + NADH + (n+1) H(+)(in) = a plastoquinol + NAD(+) + n H(+)(out). It catalyses the reaction a plastoquinone + NADPH + (n+1) H(+)(in) = a plastoquinol + NADP(+) + n H(+)(out). In terms of biological role, NDH shuttles electrons from NAD(P)H:plastoquinone, via FMN and iron-sulfur (Fe-S) centers, to quinones in the photosynthetic chain and possibly in a chloroplast respiratory chain. The immediate electron acceptor for the enzyme in this species is believed to be plastoquinone. Couples the redox reaction to proton translocation, and thus conserves the redox energy in a proton gradient. This Nasturtium officinale (Watercress) protein is NAD(P)H-quinone oxidoreductase subunit 6, chloroplastic (ndhG).